The sequence spans 351 residues: C-X-C chemokine receptor type 1 (351 aa).

The Extracellular segment spans residues 1–46 (MSNATDPQMGDDDYDLNFTGMPPTDEDYSPCRLETQSLNKYVVIVT). 2 N-linked (GlcNAc...) asparagine glycosylation sites follow: asparagine 3 and asparagine 17. The chain crosses the membrane as a helical span at residues 47–67 (YALVFLLSLLGNSLVMLVILY). The Cytoplasmic portion of the chain corresponds to 68-76 (RRVGRSVTD). A helical membrane pass occupies residues 77-97 (VYLLNLAMADLLFALTLPIWA). Over 98-112 (ASKVNGWIFGTFLCK) the chain is Extracellular. A disulfide bond links cysteine 111 and cysteine 188. The helical transmembrane segment at 113–133 (VVSLLKEVNFYSGILLLACIS) threads the bilayer. At 134–154 (VDRYLAIVHATRTLIQKRHSV) the chain is on the cytoplasmic side. Residues 155-175 (KFVCLSCWGLSVILSLPFFLF) form a helical membrane-spanning segment. The Extracellular segment spans residues 176–204 (RQAYHPNNSTPVCYEVLGNDTAKWRMVLR). 2 N-linked (GlcNAc...) asparagine glycosylation sites follow: asparagine 182 and asparagine 194. Residues 205–225 (ILPHTFGFTLPLLIMLFCYGF) traverse the membrane as a helical segment. Residues 226 to 243 (TLHTLFKAHIGQKHRAMR) lie on the Cytoplasmic side of the membrane. The chain crosses the membrane as a helical span at residues 244 to 264 (VIFAVVLIFLLCWLPYNLVLL). The Extracellular portion of the chain corresponds to 265-289 (ADTLMRTHLIKESCERRNDIGRALD). The helical transmembrane segment at 290 to 310 (ATEILGFLHSCLNPIIYAFIG) threads the bilayer. The Cytoplasmic segment spans residues 311–351 (QNFRHGFLKILATHGLVSKEFLARHHVTSYTSSSVNVSSNL).

The protein belongs to the G-protein coupled receptor 1 family. Interacts with IL8. Interacts with GNAI2.

The protein localises to the cell membrane. Functionally, receptor to interleukin-8, which is a powerful neutrophils chemotactic factor. Binding of IL-8 to the receptor causes activation of neutrophils. This response is mediated via a G-protein that activates a phosphatidylinositol-calcium second messenger system. This is C-X-C chemokine receptor type 1 (CXCR1) from Macaca mulatta (Rhesus macaque).